Reading from the N-terminus, the 218-residue chain is ATP phosphoribosyltransferase (218 aa).

Belongs to the ATP phosphoribosyltransferase family. Short subfamily. In terms of assembly, heteromultimer composed of HisG and HisZ subunits.

Its subcellular location is the cytoplasm. The enzyme catalyses 1-(5-phospho-beta-D-ribosyl)-ATP + diphosphate = 5-phospho-alpha-D-ribose 1-diphosphate + ATP. Its pathway is amino-acid biosynthesis; L-histidine biosynthesis; L-histidine from 5-phospho-alpha-D-ribose 1-diphosphate: step 1/9. Its function is as follows. Catalyzes the condensation of ATP and 5-phosphoribose 1-diphosphate to form N'-(5'-phosphoribosyl)-ATP (PR-ATP). Has a crucial role in the pathway because the rate of histidine biosynthesis seems to be controlled primarily by regulation of HisG enzymatic activity. The chain is ATP phosphoribosyltransferase from Synechococcus elongatus (strain ATCC 33912 / PCC 7942 / FACHB-805) (Anacystis nidulans R2).